The primary structure comprises 185 residues: Ribosome-recycling factor (185 aa).

Belongs to the RRF family.

The protein localises to the cytoplasm. Its function is as follows. Responsible for the release of ribosomes from messenger RNA at the termination of protein biosynthesis. May increase the efficiency of translation by recycling ribosomes from one round of translation to another. The polypeptide is Ribosome-recycling factor (Xanthomonas oryzae pv. oryzae (strain MAFF 311018)).